Consider the following 346-residue polypeptide: Thiamine-phosphate synthase (346 aa).

The interval Met1–Glu125 is unknown. The segment at Ile126–Lys346 is thiamine-phosphate synthase. Residues Gln177–Lys181 and Asn209 contribute to the 4-amino-2-methyl-5-(diphosphooxymethyl)pyrimidine site. Mg(2+) is bound by residues Asp210 and Asp229. 4-amino-2-methyl-5-(diphosphooxymethyl)pyrimidine is bound at residue Ser248. Thr274 to Ser276 contributes to the 2-[(2R,5Z)-2-carboxy-4-methylthiazol-5(2H)-ylidene]ethyl phosphate binding site. Lys277 provides a ligand contact to 4-amino-2-methyl-5-(diphosphooxymethyl)pyrimidine. Residue Gly304 coordinates 2-[(2R,5Z)-2-carboxy-4-methylthiazol-5(2H)-ylidene]ethyl phosphate.

This sequence belongs to the thiamine-phosphate synthase family. Mg(2+) serves as cofactor.

It catalyses the reaction 2-[(2R,5Z)-2-carboxy-4-methylthiazol-5(2H)-ylidene]ethyl phosphate + 4-amino-2-methyl-5-(diphosphooxymethyl)pyrimidine + 2 H(+) = thiamine phosphate + CO2 + diphosphate. The catalysed reaction is 2-(2-carboxy-4-methylthiazol-5-yl)ethyl phosphate + 4-amino-2-methyl-5-(diphosphooxymethyl)pyrimidine + 2 H(+) = thiamine phosphate + CO2 + diphosphate. It carries out the reaction 4-methyl-5-(2-phosphooxyethyl)-thiazole + 4-amino-2-methyl-5-(diphosphooxymethyl)pyrimidine + H(+) = thiamine phosphate + diphosphate. The protein operates within cofactor biosynthesis; thiamine diphosphate biosynthesis; thiamine phosphate from 4-amino-2-methyl-5-diphosphomethylpyrimidine and 4-methyl-5-(2-phosphoethyl)-thiazole: step 1/1. In terms of biological role, condenses 4-methyl-5-(beta-hydroxyethyl)thiazole monophosphate (THZ-P) and 2-methyl-4-amino-5-hydroxymethyl pyrimidine pyrophosphate (HMP-PP) to form thiamine monophosphate (TMP). In Prochlorococcus marinus (strain SARG / CCMP1375 / SS120), this protein is Thiamine-phosphate synthase.